Reading from the N-terminus, the 376-residue chain is Serpin B6 (376 aa).

The residue at position 1 (methionine 1) is an N-acetylmethionine. A Phosphoserine modification is found at serine 151. Residue lysine 195 is modified to N6-acetyllysine.

This sequence belongs to the serpin family. Ov-serpin subfamily. As to quaternary structure, forms a complex with the monomeric form of beta-tryptase.

It localises to the cytoplasm. Functionally, inhibitor of cathepsin G, kallikrein-8 and thrombin. May play an important role in the inner ear in the protection against leakage of lysosomal content during stress. May be involved in the regulation of serine proteinases present in the brain or extravasated from the blood. The polypeptide is Serpin B6 (SERPINB6) (Pongo abelii (Sumatran orangutan)).